Here is a 362-residue protein sequence, read N- to C-terminus: Formyltransferase/hydrolase complex Fhc subunit B (362 aa).

As to quaternary structure, octaheteromer. Part of the formyltransferase/hydrolase complex fhc; composed of FhcA, FhcB, FhcC and FhcD.

Its subcellular location is the cytoplasm. The protein operates within one-carbon metabolism; formaldehyde degradation; formate from formaldehyde (H(4)MPT route): step 4/5. In terms of biological role, involved in the transformation of 5-formyl tetrahydromethanopterin (5-formyl-H(4)MPT) to methanofuran (MFR) and formate via the formylmethanofuran (formyl-MFR). The polypeptide is Formyltransferase/hydrolase complex Fhc subunit B (fhcB) (Methylorubrum extorquens (strain ATCC 14718 / DSM 1338 / JCM 2805 / NCIMB 9133 / AM1) (Methylobacterium extorquens)).